The primary structure comprises 371 residues: Aminomethyltransferase (371 aa).

The protein belongs to the GcvT family. As to quaternary structure, the glycine cleavage system is composed of four proteins: P, T, L and H.

It carries out the reaction N(6)-[(R)-S(8)-aminomethyldihydrolipoyl]-L-lysyl-[protein] + (6S)-5,6,7,8-tetrahydrofolate = N(6)-[(R)-dihydrolipoyl]-L-lysyl-[protein] + (6R)-5,10-methylene-5,6,7,8-tetrahydrofolate + NH4(+). The glycine cleavage system catalyzes the degradation of glycine. The sequence is that of Aminomethyltransferase from Cellvibrio japonicus (strain Ueda107) (Pseudomonas fluorescens subsp. cellulosa).